Reading from the N-terminus, the 264-residue chain is Glutamate racemase (264 aa).

Substrate contacts are provided by residues 10–11 (DS) and 42–43 (YG). C73 functions as the Proton donor/acceptor in the catalytic mechanism. Residue 74–75 (NT) participates in substrate binding. The active-site Proton donor/acceptor is the C183. 184 to 185 (TH) provides a ligand contact to substrate.

It belongs to the aspartate/glutamate racemases family.

The catalysed reaction is L-glutamate = D-glutamate. It participates in cell wall biogenesis; peptidoglycan biosynthesis. Functionally, provides the (R)-glutamate required for cell wall biosynthesis. The chain is Glutamate racemase from Streptococcus gordonii (strain Challis / ATCC 35105 / BCRC 15272 / CH1 / DL1 / V288).